A 282-amino-acid chain; its full sequence is NAD(P)H-hydrate epimerase (282 aa).

The transit peptide at 1 to 53 directs the protein to the mitochondrion; that stretch reads MSGLRTLLGLGLLVAGSRLPRIASRQSVCRAGPIWWGTQHRSSETMASAAVKY. A YjeF N-terminal domain is found at 59–269; sequence AQAVDEELFN…ALEKKYQLNL (211 aa). Position 113–117 (113–117) interacts with (6S)-NADPHX; the sequence is NNGGD. N114 serves as a coordination point for K(+). The residue at position 138 (K138) is an N6-succinyllysine. D179 serves as a coordination point for K(+). Residues 183-189 and D212 contribute to the (6S)-NADPHX site; that span reads GFSFKGD. S215 contacts K(+).

This sequence belongs to the NnrE/AIBP family. In terms of assembly, homodimer. Interacts with APOA1 and APOA2. Requires K(+) as cofactor. In terms of processing, undergoes physiological phosphorylation during sperm capacitation, downstream to PKA activation.

The protein resides in the mitochondrion. It is found in the secreted. The enzyme catalyses (6R)-NADHX = (6S)-NADHX. It carries out the reaction (6R)-NADPHX = (6S)-NADPHX. Catalyzes the epimerization of the S- and R-forms of NAD(P)HX, a damaged form of NAD(P)H that is a result of enzymatic or heat-dependent hydration. This is a prerequisite for the S-specific NAD(P)H-hydrate dehydratase to allow the repair of both epimers of NAD(P)HX. Accelerates cholesterol efflux from endothelial cells to high-density lipoprotein (HDL) and thereby regulates angiogenesis. The chain is NAD(P)H-hydrate epimerase from Rattus norvegicus (Rat).